A 101-amino-acid chain; its full sequence is Small ribosomal subunit protein uS10 (101 aa).

It belongs to the universal ribosomal protein uS10 family. Part of the 30S ribosomal subunit.

Functionally, involved in the binding of tRNA to the ribosomes. The sequence is that of Small ribosomal subunit protein uS10 from Parabacteroides distasonis (strain ATCC 8503 / DSM 20701 / CIP 104284 / JCM 5825 / NCTC 11152).